The sequence spans 417 residues: Glucose-1-phosphate adenylyltransferase (417 aa).

Alpha-D-glucose 1-phosphate contacts are provided by residues Tyr105, Gly170, 185 to 186 (EK), and Ser203.

This sequence belongs to the bacterial/plant glucose-1-phosphate adenylyltransferase family. As to quaternary structure, homotetramer.

It catalyses the reaction alpha-D-glucose 1-phosphate + ATP + H(+) = ADP-alpha-D-glucose + diphosphate. It participates in glycan biosynthesis; glycogen biosynthesis. Involved in the biosynthesis of ADP-glucose, a building block required for the elongation reactions to produce glycogen. Catalyzes the reaction between ATP and alpha-D-glucose 1-phosphate (G1P) to produce pyrophosphate and ADP-Glc. The sequence is that of Glucose-1-phosphate adenylyltransferase from Granulibacter bethesdensis (strain ATCC BAA-1260 / CGDNIH1).